The following is a 264-amino-acid chain: uncharacterized protein (264 aa).

One can recognise an ABC transporter domain in the interval 3–243 (LQLDNVSLKR…QILSAFFDTP (241 aa)). Residue 35–42 (GLNGAGKT) coordinates ATP.

This sequence belongs to the ABC transporter superfamily.

This is an uncharacterized protein from Bacillus subtilis (strain 168).